A 233-amino-acid polypeptide reads, in one-letter code: Short chain dehydrogenase trt9 (233 aa).

Residues aspartate 33, arginine 95, tyrosine 127, lysine 131, and valine 160 each contribute to the NADP(+) site. The Proton donor role is filled by tyrosine 127. The active-site Lowers pKa of active site Tyr is the lysine 131.

The protein belongs to the short-chain dehydrogenases/reductases (SDR) family.

It participates in secondary metabolite biosynthesis; terpenoid biosynthesis. Its function is as follows. Short chain dehydrogenase; part of the gene cluster that mediates the biosynthesis of terretonin, a fungal meroterpenoid that acts as a mycotoxin. The first step of the pathway is the synthesis of 3,5-dimethylorsellinic acid (DMOA) by the polyketide synthase trt4. DMOA is then prenylated into farnesyl-DMOA by the polyprenyl transferase trt2. Methylation by the methyltransferase trt5 then leads to farnesyl-DMOA methyl ester which is further subject to epoxidation by the FAD-dependent monooxygenase trt8 to yield epoxyfarnesyl-DMOA methyl ester. Cyclization of epoxyfarnesyl-DMOA methyl ester by the terpene cyclase trt1 leads to a tetracycle intermediate which is in turn converted to preterretonin. Dehydrogenase trt9 comes next to transform preterretonin to preterrenoid. The FAD-dependent monooxygenase trt3 is then required for the C-hydroxylation at C16 of preterrenoid to yield terrenoid. The cytochrome P450 trt6 catalyzes three successive oxidations to transform terrenoid into an unstable intermediate, which then undergoes the D-ring expansion and unusual rearrangement of the methoxy group to afford the core skeleton of terretonin. Trt14 catalyzes the D-ring expansion of terretonin involving intramolecular methoxy rearrangement as well as the hydrolysis of the expanded D-ring and the methyl ester moiety. Finally, the nonheme iron-dependent dioxygenase trt7 accomplishes the last two oxidation reactions steps to complete the biosynthesis of terretonin. Terretonin C is produced via spontaneous decarboxylation of the terretonin precursor. Another shunt product of the terretonin biosynthesis is dihydrofarnesyl-DMOA, derived from epoxyfarnesyl-DMOA through hydrolysis of the epoxide. This is Short chain dehydrogenase trt9 from Aspergillus terreus (strain NIH 2624 / FGSC A1156).